Reading from the N-terminus, the 367-residue chain is Phospho-N-acetylmuramoyl-pentapeptide-transferase (367 aa).

Transmembrane regions (helical) follow at residues 16–36 (LLLAAAAFILTLIVGGWWVHF), 62–82 (TMGGVMIVSTVVVLTVLFNLV), 87–107 (MLLPLGVMISFAVLGAIDDWL), 125–145 (FWIMTAVAFVASLALYLPQPY), 158–178 (VGEVNIGLWFIPIAVLIIVFI), 190–210 (SLAGWNLTLSFGAYGVITFLA), 214–234 (LTNLMAFCFTVVGACAAFLWY), 240–260 (QVFMGDLGALSLGATLAVVAL), 264–284 (QWILLPVIGIVFVVEALSTLI), and 326–346 (FVLIGTVAAMVGISLALIFGS).

Belongs to the glycosyltransferase 4 family. MraY subfamily. The cofactor is Mg(2+).

The protein resides in the cell membrane. The catalysed reaction is UDP-N-acetyl-alpha-D-muramoyl-L-alanyl-gamma-D-glutamyl-meso-2,6-diaminopimeloyl-D-alanyl-D-alanine + di-trans,octa-cis-undecaprenyl phosphate = di-trans,octa-cis-undecaprenyl diphospho-N-acetyl-alpha-D-muramoyl-L-alanyl-D-glutamyl-meso-2,6-diaminopimeloyl-D-alanyl-D-alanine + UMP. It functions in the pathway cell wall biogenesis; peptidoglycan biosynthesis. Its function is as follows. Catalyzes the initial step of the lipid cycle reactions in the biosynthesis of the cell wall peptidoglycan: transfers peptidoglycan precursor phospho-MurNAc-pentapeptide from UDP-MurNAc-pentapeptide onto the lipid carrier undecaprenyl phosphate, yielding undecaprenyl-pyrophosphoryl-MurNAc-pentapeptide, known as lipid I. This chain is Phospho-N-acetylmuramoyl-pentapeptide-transferase, found in Chloroflexus aggregans (strain MD-66 / DSM 9485).